We begin with the raw amino-acid sequence, 486 residues long: uncharacterized protein (486 aa).

9 LRR repeats span residues 18–39, 43–59, 60–81, 82–103, 104–125, 126–147, 148–168, 169–190, and 198–219; these read NLKKIIINRDNVININILKKLV, ELHIIYYDNNILNNIPE, NIKSLYISNLNIINLNFITKLK, NITYLDISYNKNSNISNIILPH, SIEFLNCESCNINDYNFINNLV, NLKKLIISKNKFGNFNNVFPIS, IVELNMESIQIKDYKFIEKLI, NLKKLDISFNVKKNNIHLIKFP, and DYQSYKENYNYLKNLSNIIEYE.

This is an uncharacterized protein from Amsacta moorei entomopoxvirus (AmEPV).